Here is a 5121-residue protein sequence, read N- to C-terminus: Hydrocephalus-inducing protein homolog (5121 aa).

An interaction with KIF9 region spans residues Glu-363–Gly-754. The span at Leu-956 to Ala-967 shows a compositional bias: basic residues. 7 disordered regions span residues Leu-956–Phe-987, Leu-1925–Ser-1951, Ser-2155–Gly-2186, Glu-2333–Thr-2459, Leu-2482–Glu-2534, Thr-2664–Met-2684, and Lys-3852–Thr-3874. Positions Glu-1908–Asp-1933 form a coiled coil. The segment covering Ser-1936–Ser-1951 has biased composition (polar residues). The stretch at Ala-2267–Lys-2365 forms a coiled coil. Basic and acidic residues-rich tracts occupy residues Glu-2333–Lys-2360, Val-2393–Asn-2418, Asp-2444–Leu-2453, Glu-2489–Arg-2498, and Lys-2509–Glu-2534. A coiled-coil region spans residues Gly-2504 to Glu-2549. 2 stretches are compositionally biased toward polar residues: residues Thr-2664–Gly-2679 and Gly-3857–Thr-3874.

Interacts with KIF9.

It localises to the cell projection. The protein resides in the cilium. It is found in the cytoplasm. Its subcellular location is the cytoskeleton. The protein localises to the cilium axoneme. It localises to the flagellum. Its function is as follows. Required for ciliary motility. The sequence is that of Hydrocephalus-inducing protein homolog (HYDIN) from Homo sapiens (Human).